A 456-amino-acid chain; its full sequence is Kynurenine 3-monooxygenase (456 aa).

Belongs to the aromatic-ring hydroxylase family. KMO subfamily. FAD serves as cofactor.

The enzyme catalyses L-kynurenine + NADPH + O2 + H(+) = 3-hydroxy-L-kynurenine + NADP(+) + H2O. It participates in cofactor biosynthesis; NAD(+) biosynthesis; quinolinate from L-kynurenine: step 1/3. Catalyzes the hydroxylation of L-kynurenine (L-Kyn) to form 3-hydroxy-L-kynurenine (L-3OHKyn). Required for synthesis of quinolinic acid. The sequence is that of Kynurenine 3-monooxygenase from Xanthomonas campestris pv. campestris (strain B100).